Reading from the N-terminus, the 373-residue chain is S-adenosylmethionine:tRNA ribosyltransferase-isomerase (373 aa).

Belongs to the QueA family. Monomer.

It localises to the cytoplasm. The catalysed reaction is 7-aminomethyl-7-carbaguanosine(34) in tRNA + S-adenosyl-L-methionine = epoxyqueuosine(34) in tRNA + adenine + L-methionine + 2 H(+). It participates in tRNA modification; tRNA-queuosine biosynthesis. Its function is as follows. Transfers and isomerizes the ribose moiety from AdoMet to the 7-aminomethyl group of 7-deazaguanine (preQ1-tRNA) to give epoxyqueuosine (oQ-tRNA). The sequence is that of S-adenosylmethionine:tRNA ribosyltransferase-isomerase from Prochlorococcus marinus (strain MIT 9515).